A 478-amino-acid chain; its full sequence is MAPKKKGKKGKAKGTAIVDGVAPEDMTKEQVEEHVARIREELDREREERNYFQLERDKIHTFWEITRRQLEEKKAELRNKDREMEEAEERHQVEIKVYKQKVKHLLYEHQNNLAEVKAEGTVVMKLAQKEHRTQEGALRKDMRVLKVELKEQELANEVVIKNLCLKQAEEITKMRNDFERQVREIEAKYDKKMKMLRDELDLRRKTEIHEVEERKNGQISTLMQRHEEAFTDIKNYYNDITLNNLALINSLKEQMEDMRKKEEHMEREMAEVTLQNRRLADPLQKAKDEMNEMQKRLGNHERDKQILVCTKARLKVAERELKDLKWEHEVLEQRFIKVQQEREELYRKFADAIQEVQQKTGFKNLLLERKLQALNAAVEKREVQFNEVLAASNLDPTALTLVSRKLEDVLESKNTTIKDLQYELARVCKAHNDLLRTYEAKLLAFGIPLDNVGFKPLETAVIGQTLGQGPAGLVGAPT.

Basic residues predominate over residues 1 to 12 (MAPKKKGKKGKA). Residues 1 to 29 (MAPKKKGKKGKAKGTAIVDGVAPEDMTKE) are disordered. Residues 1 to 114 (MAPKKKGKKG…LLYEHQNNLA (114 aa)) are regulates microtubule-binding. Coiled-coil stretches lie at residues 24 to 207 (EDMT…RKTE) and 242 to 426 (LNNL…ELAR). Residues 115–258 (EVKAEGTVVM…NSLKEQMEDM (144 aa)) are microtubule-binding. The interaction with SMO stretch occupies residues 357–478 (QQKTGFKNLL…GPAGLVGAPT (122 aa)).

The protein belongs to the DRC4 family. As to quaternary structure, component of the nexin-dynein regulatory complex (N-DRC). Interacts with microtubules. Interacts with SMO. Interacts (via coiled-coil domains) with RAB3B (in GTP-bound form). Interacts with DRC1. Interacts with DRC7. In terms of tissue distribution, highly expressed in adult testes and lung. Weakly or not expressed in other tested tissues.

It is found in the cytoplasm. It localises to the cytoskeleton. Its subcellular location is the cell projection. The protein localises to the cilium. The protein resides in the flagellum. It is found in the cilium axoneme. It localises to the cilium basal body. Its subcellular location is the golgi apparatus. The protein localises to the flagellum axoneme. In terms of biological role, component of the nexin-dynein regulatory complex (N-DRC), a key regulator of ciliary/flagellar motility which maintains the alignment and integrity of the distal axoneme and regulates microtubule sliding in motile axonemes. Plays an important role in the assembly of the N-DRC linker. Plays dual roles at both the primary (or non-motile) cilia to regulate hedgehog signaling and in motile cilia to coordinate cilia movement. Required for proper motile cilia functioning. Positively regulates ciliary smoothened (SMO)-dependent Hedgehog (Hh) signaling pathway by facilitating the trafficking of SMO into the cilium and the stimulation of SMO activity in a GRK2-dependent manner. May play a role in the spermatozoa motility. The protein is Dynein regulatory complex subunit 4 (Gas8) of Mus musculus (Mouse).